Here is a 234-residue protein sequence, read N- to C-terminus: Sugar fermentation stimulation protein A (234 aa).

The H-T-H motif DNA-binding region spans 201–220; sequence LLSEAQNKGVEVLAYKAELS.

It belongs to the SfsA family.

Binds to DNA non-specifically. Could be a regulatory factor involved in maltose metabolism. The chain is Sugar fermentation stimulation protein A from Salmonella agona (strain SL483).